We begin with the raw amino-acid sequence, 316 residues long: Ribosomal RNA large subunit methyltransferase F (316 aa).

Belongs to the methyltransferase superfamily. METTL16/RlmF family.

It is found in the cytoplasm. The catalysed reaction is adenosine(1618) in 23S rRNA + S-adenosyl-L-methionine = N(6)-methyladenosine(1618) in 23S rRNA + S-adenosyl-L-homocysteine + H(+). Functionally, specifically methylates the adenine in position 1618 of 23S rRNA. This Pseudomonas entomophila (strain L48) protein is Ribosomal RNA large subunit methyltransferase F.